The primary structure comprises 563 residues: MVDNIQIVEALNAVLTDLTLQEISEKLEAPKSSDLGDVAFPTFTLAKTLHKAPQLIAADIVAAIDQEGFEKVVATGPYVNFFLDKVATSNQVLKTVFDLEGAYGDNVDGQGAKVTIDMSSPNIAKPMSMGHLRSTVIGNALANITAKNGYAPVKINHLGDWGTQFGKLIYAYKAWGSEEEVKSDPIATLLKYYVEFHEKAKENDSLNDEGRAWFKKLEDGDEEAHRLWQWFRAESLKEFSEIYDRLDITFDSFNGEAFYNDKMDKVVDLLEEKNLLVESQGAQIVDLSHINPNLTPAMIKRSDGATLYMTRDLAAALYRKETYDFAKSLYVVGGEQREHFVQMKAVLSLMGFEWSDDIEHIAFGLITFNGKKMSTRKGDVVLLKDVLDDAHELALKQIQEKNPDLGDKDTVAEEVGAGAVVFHDLMNDRTNNFDFNLEEVVRFEGDTGPYVQYTNARAKSILRKTSVQLTSDDLNLTDPATWDIITTLNNFPKTVQRAWQQREASIIAKYALNLSRAFNKYYANSKILTEDVQLNARLVLVKSVSIVLTESLRLLGVKAPEEM.

Residues 121–131 carry the 'HIGH' region motif; that stretch reads PNIAKPMSMGH.

It belongs to the class-I aminoacyl-tRNA synthetase family. In terms of assembly, monomer.

It is found in the cytoplasm. The enzyme catalyses tRNA(Arg) + L-arginine + ATP = L-arginyl-tRNA(Arg) + AMP + diphosphate. This is Arginine--tRNA ligase from Leuconostoc mesenteroides subsp. mesenteroides (strain ATCC 8293 / DSM 20343 / BCRC 11652 / CCM 1803 / JCM 6124 / NCDO 523 / NBRC 100496 / NCIMB 8023 / NCTC 12954 / NRRL B-1118 / 37Y).